Consider the following 62-residue polypeptide: Guanine nucleotide-binding protein subunit gamma (62 aa).

The tract at residues 40–62 (DMLVSGPTDQHNPFQEKKSCSVL) is disordered. The segment covering 53–62 (FQEKKSCSVL) has biased composition (basic and acidic residues). A Cysteine methyl ester modification is found at Cys-59. Cys-59 is lipidated: S-geranylgeranyl cysteine. Positions 60–62 (SVL) are cleaved as a propeptide — removed in mature form.

Belongs to the G protein gamma family. As to quaternary structure, g proteins are composed of 3 units, alpha, beta and gamma. Interacts with gpb-1 and gpb-2. In terms of tissue distribution, predominantly expressed in the central nervous system.

The protein resides in the cell membrane. Its function is as follows. Guanine nucleotide-binding proteins (G proteins) are involved as a modulator or transducer in various transmembrane signaling systems. The beta and gamma chains are required for the GTPase activity, for replacement of GDP by GTP, and for G protein-effector interaction. This is Guanine nucleotide-binding protein subunit gamma (gpc-1) from Caenorhabditis elegans.